The primary structure comprises 33 residues: Cytochrome b6-f complex subunit 5 (33 aa).

Residues 5-25 form a helical membrane-spanning segment; that stretch reads LLFGIILGLISCVLAGLFVSA.

Belongs to the PetG family. In terms of assembly, the 4 large subunits of the cytochrome b6-f complex are cytochrome b6, subunit IV (17 kDa polypeptide, PetD), cytochrome f and the Rieske protein, while the 4 small subunits are PetG, PetL, PetM and PetN. The complex functions as a dimer.

The protein resides in the plastid. It localises to the chloroplast thylakoid membrane. Its function is as follows. Component of the cytochrome b6-f complex, which mediates electron transfer between photosystem II (PSII) and photosystem I (PSI), cyclic electron flow around PSI, and state transitions. PetG is required for either the stability or assembly of the cytochrome b6-f complex. In Bigelowiella natans (Pedinomonas minutissima), this protein is Cytochrome b6-f complex subunit 5.